Consider the following 89-residue polypeptide: Small ribosomal subunit protein uS15 (89 aa).

The protein belongs to the universal ribosomal protein uS15 family. As to quaternary structure, part of the 30S ribosomal subunit. Forms a bridge to the 50S subunit in the 70S ribosome, contacting the 23S rRNA.

One of the primary rRNA binding proteins, it binds directly to 16S rRNA where it helps nucleate assembly of the platform of the 30S subunit by binding and bridging several RNA helices of the 16S rRNA. Its function is as follows. Forms an intersubunit bridge (bridge B4) with the 23S rRNA of the 50S subunit in the ribosome. The sequence is that of Small ribosomal subunit protein uS15 from Streptococcus gordonii (strain Challis / ATCC 35105 / BCRC 15272 / CH1 / DL1 / V288).